A 694-amino-acid chain; its full sequence is Potassium-transporting ATPase ATP-binding subunit (694 aa).

Transmembrane regions (helical) follow at residues 36–56 (VMFV…RDLI), 62–82 (LAFS…ANFA), 218–238 (IALN…TATI), and 249–269 (IPII…IGAL). Aspartate 306 acts as the 4-aspartylphosphate intermediate in catalysis. ATP contacts are provided by residues aspartate 343, glutamate 347, 376–383 (FTAQTRMS), and lysine 394. Mg(2+) contacts are provided by aspartate 530 and aspartate 534. The next 3 membrane-spanning stretches (helical) occupy residues 600-620 (FAII…LNVM), 628-648 (AILS…PLSL), and 666-686 (LVIY…LIDL).

Belongs to the cation transport ATPase (P-type) (TC 3.A.3) family. Type IA subfamily. In terms of assembly, the system is composed of three essential subunits: KdpA, KdpB and KdpC.

Its subcellular location is the cell inner membrane. It catalyses the reaction K(+)(out) + ATP + H2O = K(+)(in) + ADP + phosphate + H(+). Functionally, part of the high-affinity ATP-driven potassium transport (or Kdp) system, which catalyzes the hydrolysis of ATP coupled with the electrogenic transport of potassium into the cytoplasm. This subunit is responsible for energy coupling to the transport system and for the release of the potassium ions to the cytoplasm. The protein is Potassium-transporting ATPase ATP-binding subunit of Agrobacterium fabrum (strain C58 / ATCC 33970) (Agrobacterium tumefaciens (strain C58)).